The chain runs to 475 residues: MAKEHIVLFPFMSQGHIIPFLSLAKLISERHPTYTITLLNTPLNILNLQSTLPPNSNIHLKSLPYRSSDFGLPPDRENTDSLPFPLVLSFYQSGESLATHFTHFVSDLTRQNHDTPPLLIVADVFFGWTAEIAKRLNTHVSFSTCGAYGTAAYFSVWLHLPHAETDLPDFTAPGFPETFKLQRNQLSTYLKKADGSDRWSKFFQRQISLSLTSDAMICNTVEEMEAEGLRLLRKNTGLRVWSIGPLLPSLPPNSSLGRSGRKSGMEVSYIMKWLDSHPPGSVVYVSFGSIHDTAAQMTSLAVGLAVELATRSCGHSGRRFGGNRNRNSNPNGVPDEFEARMRGSGRGILIHGWAPQLEILEHESTGAFVSHCGWNSTLESLSRGVCMIGWPLAAEQFYNSKMVEEDWEWGGTCEGSGGGVRSEEVERLVRLVTEDEKGSDEENEQYDEMIGGYEEKGGEGSLSGQLIKFIGMESQ.

His-16 (proton acceptor) is an active-site residue. His-16 contributes to the an anthocyanidin binding site. Asp-123 acts as the Charge relay in catalysis. Residues Thr-144, Ala-354, Gln-356, His-371, Trp-374, Asn-375, Ser-376, and Glu-379 each contribute to the UDP-alpha-D-glucose site. Ala-394 contacts an anthocyanidin. Glu-395 and Gln-396 together coordinate UDP-alpha-D-glucose.

Belongs to the UDP-glycosyltransferase family. In terms of tissue distribution, mainly expressed in stamens.

It carries out the reaction crocetin + UDP-alpha-D-glucose = beta-D-glucosyl crocetin + UDP. The enzyme catalyses beta-D-glucosyl crocetin + UDP-alpha-D-glucose = bis(beta-D-glucosyl) crocetin + UDP. It catalyses the reaction beta-D-gentiobiosyl crocetin + UDP-alpha-D-glucose = beta-D-gentiobiosyl beta-D-glucosyl crocetin + UDP. Crocetin glucosyltransferase involved in the synthesis of crocin, one of the apocarotenoids responsible for the color and bitter taste of saffron. The chain is Crocetin glucosyltransferase 3 (GLT3) from Crocus sativus (Saffron).